The primary structure comprises 364 residues: DNA polymerase IV (364 aa).

Residues 14 to 198 (IIHIDMDAFF…LPIEKFHGVG (185 aa)) form the UmuC domain. Mg(2+) contacts are provided by aspartate 18 and aspartate 116. Residue glutamate 117 is part of the active site.

This sequence belongs to the DNA polymerase type-Y family. Monomer. The cofactor is Mg(2+).

It is found in the cytoplasm. It carries out the reaction DNA(n) + a 2'-deoxyribonucleoside 5'-triphosphate = DNA(n+1) + diphosphate. Poorly processive, error-prone DNA polymerase involved in untargeted mutagenesis. Copies undamaged DNA at stalled replication forks, which arise in vivo from mismatched or misaligned primer ends. These misaligned primers can be extended by PolIV. Exhibits no 3'-5' exonuclease (proofreading) activity. May be involved in translesional synthesis, in conjunction with the beta clamp from PolIII. This Streptococcus pyogenes serotype M28 (strain MGAS6180) protein is DNA polymerase IV.